The following is an 817-amino-acid chain: MKRAHKAPKASHKAHKRQKVEKKPRPEINVPKRKIRLDDLGWNQVSMPDRLEDFEGFYGLEEIEDVHVVKDAVTGNLSFETTKTDEQIEQDIEKAWQREEEEAKFLEKITFGGEPKNGEDVVEEETAPVEDTVEATQDEDAASWGGFSDDDVAQNGDEQSEDVQMVEEDAPPTPNVVLSTTKADGDGEAEPKKMNKRERAAEKKRIAALAKKTKKPDDDEASEGKTFGPGAFDILANRADDEDDEVDVSAWEELELSTKILESLAKLKFSKPTTIQASTIPEIMAGRDVIGKASTGSGKTLAFGIPIIESYLASKSKSKDVKDKTPLALIIAPTRELAHQITAHLTALCAKGAFEAPLIASVTGGLAVQKQRRQLEKADIIVGTPGRLWEVISTGHGLLEKVKQIRFLVVDEADRLLSQGNYKELGEILKILEKDAPAEGEAEAEETTEVERQTLVFSATFQKGLQQKLAGKAKGGSDNLMSKQQSMEYLLKKINFREEKPKFIDANPSSQMASKLKEGLIECAGTEKDLYLYSLLMFYPKKRALIFTNSISAVRRLTPFLQNLALPALPLHSSMAQKARLRSIERFKERPGSILVATDVAARGLDIPKVELVIHYHLPRAADTYVHRSGRTARAEASGSSILICAPEEVGGVRRLIAKVHARADEAPKSKKTAYFIRTLDIDRRIVARLKPRASISKKLADTVIAKEKKHSEDDTLRQAAEDLGVDYDSEEFEKEAKGKKGRGTGRKKKEKEASEMTKGEQQALRAELRGLLSQRINTGVSARYLTSGGIDVDALMAGEGNMEFLGNVDGLGFDEE.

The segment covering 1–20 has biased composition (basic residues); sequence MKRAHKAPKASHKAHKRQKV. 2 disordered regions span residues 1–29 and 110–231; these read MKRA…PEIN and TFGG…GPGA. Composition is skewed to acidic residues over residues 120–141 and 148–170; these read DVVE…DEDA and SDDD…EEDA. A compositionally biased stretch (basic and acidic residues) spans 183–205; that stretch reads ADGDGEAEPKKMNKRERAAEKKR. A Q motif motif is present at residues 249 to 277; sequence SAWEELELSTKILESLAKLKFSKPTTIQA. The Helicase ATP-binding domain occupies 280–479; sequence IPEIMAGRDV…AGKAKGGSDN (200 aa). 293 to 300 is a binding site for ATP; sequence ASTGSGKT. The short motif at 411–414 is the DEAD box element; that stretch reads DEAD. The Helicase C-terminal domain maps to 531–675; the sequence is YLYSLLMFYP…EAPKSKKTAY (145 aa). The disordered stretch occupies residues 731 to 763; that stretch reads EEFEKEAKGKKGRGTGRKKKEKEASEMTKGEQQ. A compositionally biased stretch (basic residues) spans 738 to 750; that stretch reads KGKKGRGTGRKKK.

The protein belongs to the DEAD box helicase family. DDX24/MAK5 subfamily.

The protein localises to the nucleus. It is found in the nucleolus. The catalysed reaction is ATP + H2O = ADP + phosphate + H(+). ATP-binding RNA helicase involved in the biogenesis of 60S ribosomal subunits and is required for the normal formation of 25S and 5.8S rRNAs. The sequence is that of ATP-dependent RNA helicase MAK5 (MAK5) from Phaeosphaeria nodorum (strain SN15 / ATCC MYA-4574 / FGSC 10173) (Glume blotch fungus).